The sequence spans 476 residues: Ribulose bisphosphate carboxylase large chain (476 aa).

The propeptide occupies 1–2 (MS). P3 is modified (N-acetylproline). N6,N6,N6-trimethyllysine is present on K14. 2 residues coordinate substrate: N123 and T173. K175 serves as the catalytic Proton acceptor. Residue K177 participates in substrate binding. Residues K201, D203, and E204 each contribute to the Mg(2+) site. N6-carboxylysine is present on K201. The active-site Proton acceptor is the H294. R295, H327, and S379 together coordinate substrate.

It belongs to the RuBisCO large chain family. Type I subfamily. As to quaternary structure, heterohexadecamer of 8 large chains and 8 small chains; disulfide-linked. The disulfide link is formed within the large subunit homodimers. Mg(2+) serves as cofactor. In terms of processing, the disulfide bond which can form in the large chain dimeric partners within the hexadecamer appears to be associated with oxidative stress and protein turnover.

It is found in the plastid. It localises to the chloroplast. It carries out the reaction 2 (2R)-3-phosphoglycerate + 2 H(+) = D-ribulose 1,5-bisphosphate + CO2 + H2O. It catalyses the reaction D-ribulose 1,5-bisphosphate + O2 = 2-phosphoglycolate + (2R)-3-phosphoglycerate + 2 H(+). In terms of biological role, ruBisCO catalyzes two reactions: the carboxylation of D-ribulose 1,5-bisphosphate, the primary event in carbon dioxide fixation, as well as the oxidative fragmentation of the pentose substrate in the photorespiration process. Both reactions occur simultaneously and in competition at the same active site. In Phaseolus vulgaris (Kidney bean), this protein is Ribulose bisphosphate carboxylase large chain.